A 607-amino-acid polypeptide reads, in one-letter code: Large ribosomal subunit assembly factor BipA (607 aa).

The tr-type G domain maps to 3 to 198; that stretch reads HSIRNIAIIA…SIIKYAPAPN (196 aa). GTP is bound by residues 15-20 and 128-131; these read DHGKTT and NKID.

The protein belongs to the TRAFAC class translation factor GTPase superfamily. Classic translation factor GTPase family. BipA subfamily. In terms of assembly, monomer.

It localises to the cytoplasm. It catalyses the reaction GTP + H2O = GDP + phosphate + H(+). In terms of biological role, a 50S ribosomal subunit assembly protein with GTPase activity, required for 50S subunit assembly at low temperatures, may also play a role in translation. Binds GTP and analogs. Binds the 70S ribosome between the 30S and 50S subunits, in a similar position as ribosome-bound EF-G; it contacts a number of ribosomal proteins, both rRNAs and the A-site tRNA. The protein is Large ribosomal subunit assembly factor BipA of Buchnera aphidicola subsp. Acyrthosiphon pisum (strain APS) (Acyrthosiphon pisum symbiotic bacterium).